The chain runs to 487 residues: NAD(+)--arginine ADP-ribosyltransferase EFV (487 aa).

Positions 2–51 (SQLNKWQKELQALQKANYQETDNQLFNVYRQSLIDIKKRLKVYTENAESL) form a coiled coil. In terms of domain architecture, TR mART core spans 315 to 487 (LDFFGQSDLQ…DNILEVTILG (173 aa)). Residues 346-358 (TSDAFAKMNKILR) and 394-400 (RGVSANE) each bind NAD(+). Active-site residues include R394, S415, and E463. E463 contacts NAD(+).

The protein resides in the secreted. The catalysed reaction is L-arginyl-[protein] + NAD(+) = N(omega)-(ADP-D-ribosyl)-L-arginyl-[protein] + nicotinamide + H(+). In terms of biological role, a probable mono(ADP-ribosyl)transferase, it may ADP-ribosylate Arg in target protein(s). Upon expression in yeast cells causes cell death. This Enterococcus faecalis (strain ATCC 700802 / V583) protein is NAD(+)--arginine ADP-ribosyltransferase EFV.